Here is a 406-residue protein sequence, read N- to C-terminus: Dual-specificity RNA methyltransferase RlmN (406 aa).

Catalysis depends on E119, which acts as the Proton acceptor. Residues 125 to 370 (DKGRGTLCVS…AMVRRTRGDD (246 aa)) enclose the Radical SAM core domain. Cysteines 132 and 375 form a disulfide. 3 residues coordinate [4Fe-4S] cluster: C139, C143, and C146. Residues 192–193 (GE), S224, 246–248 (SLH), and N332 each bind S-adenosyl-L-methionine. Catalysis depends on C375, which acts as the S-methylcysteine intermediate.

This sequence belongs to the radical SAM superfamily. RlmN family. It depends on [4Fe-4S] cluster as a cofactor.

It is found in the cytoplasm. The enzyme catalyses adenosine(2503) in 23S rRNA + 2 reduced [2Fe-2S]-[ferredoxin] + 2 S-adenosyl-L-methionine = 2-methyladenosine(2503) in 23S rRNA + 5'-deoxyadenosine + L-methionine + 2 oxidized [2Fe-2S]-[ferredoxin] + S-adenosyl-L-homocysteine. It carries out the reaction adenosine(37) in tRNA + 2 reduced [2Fe-2S]-[ferredoxin] + 2 S-adenosyl-L-methionine = 2-methyladenosine(37) in tRNA + 5'-deoxyadenosine + L-methionine + 2 oxidized [2Fe-2S]-[ferredoxin] + S-adenosyl-L-homocysteine. In terms of biological role, specifically methylates position 2 of adenine 2503 in 23S rRNA and position 2 of adenine 37 in tRNAs. m2A2503 modification seems to play a crucial role in the proofreading step occurring at the peptidyl transferase center and thus would serve to optimize ribosomal fidelity. In Xylella fastidiosa (strain Temecula1 / ATCC 700964), this protein is Dual-specificity RNA methyltransferase RlmN.